The sequence spans 963 residues: IQ motif and SEC7 domain-containing protein 1 (963 aa).

The interval 21–88 (SGVEGEAPSS…TRRPKLQHST (68 aa)) is disordered. Over residues 29-38 (SSETGTSLDS) the composition is skewed to polar residues. Phosphoserine is present on residues Ser-89, Ser-105, and Ser-107. Residues 134 to 163 (TRHAARTIQTAFRQYQMNKNFERLRSSMSE) form the IQ domain. Phosphoserine occurs at positions 180, 249, and 253. 2 disordered regions span residues 312-332 (LSPPLPLSQAGDRPSSTESDL) and 349-513 (KEDK…RNSW). 2 stretches are compositionally biased toward basic and acidic residues: residues 366 to 376 (ERQEQRLRVEH) and 430 to 446 (LPREEPELRPRPPRPLD). The span at 471-489 (DSINSTSNSNDTINCSSES) shows a compositional bias: low complexity. 2 positions are modified to phosphoserine: Ser-512 and Ser-515. The SEC7 domain maps to 517 to 710 (AFSNDVIRKR…MGIYERIRKR (194 aa)). The 93-residue stretch at 774-866 (HQREIFLFND…LRESIAEVQE (93 aa)) folds into the PH domain. Positions 848-879 (QDRKKFTDDLRESIAEVQEMEKHRIESELEKQ) form a coiled coil. At Ser-892 the chain carries Phosphoserine. Tyr-911 is subject to Phosphotyrosine. The disordered stretch occupies residues 922-947 (LSSSLRDLSEAGKRGRRSSAGSLESN). A phosphoserine mark is found at Ser-924 and Ser-925.

This sequence belongs to the BRAG family. In terms of assembly, interacts with ARF1 and ARF6. Interacts with GRIA2; the interaction is required for ARF6 activation. Expressed in brain, ovary, heart, lung, liver, kidney and leukocytes. Moderate expression was also detected in lung, skeletal muscle, placenta, small intestine, pancreas, spleen and testis.

The protein localises to the cytoplasm. The protein resides in the nucleus. It is found in the postsynaptic density. It localises to the cytoplasmic vesicle. Its subcellular location is the secretory vesicle. The protein localises to the synaptic vesicle. In terms of biological role, guanine nucleotide exchange factor for ARF1 and ARF6. Guanine nucleotide exchange factor activity is enhanced by lipid binding. Accelerates GTP binding by ARFs of all three classes. Guanine nucleotide exchange protein for ARF6, mediating internalization of beta-1 integrin. Involved in neuronal development. In neurons, plays a role in the control of vesicle formation by endocytoc cargo. Upon long term depression, interacts with GRIA2 and mediates the activation of ARF6 to internalize synaptic AMPAR receptors. This chain is IQ motif and SEC7 domain-containing protein 1, found in Homo sapiens (Human).